Consider the following 123-residue polypeptide: Ribosome-binding factor A (123 aa).

This sequence belongs to the RbfA family. As to quaternary structure, monomer. Binds 30S ribosomal subunits, but not 50S ribosomal subunits or 70S ribosomes.

The protein localises to the cytoplasm. Its function is as follows. One of several proteins that assist in the late maturation steps of the functional core of the 30S ribosomal subunit. Associates with free 30S ribosomal subunits (but not with 30S subunits that are part of 70S ribosomes or polysomes). Required for efficient processing of 16S rRNA. May interact with the 5'-terminal helix region of 16S rRNA. The chain is Ribosome-binding factor A from Legionella pneumophila (strain Lens).